A 547-amino-acid polypeptide reads, in one-letter code: Chaperonin GroEL (547 aa).

ATP is bound by residues 30–33, Lys-51, 87–91, Gly-415, 479–481, and Asp-495; these read TLGP, DGTTT, and NAA.

The protein belongs to the chaperonin (HSP60) family. As to quaternary structure, forms a cylinder of 14 subunits composed of two heptameric rings stacked back-to-back. Interacts with the co-chaperonin GroES.

Its subcellular location is the cytoplasm. It catalyses the reaction ATP + H2O + a folded polypeptide = ADP + phosphate + an unfolded polypeptide.. Its function is as follows. Together with its co-chaperonin GroES, plays an essential role in assisting protein folding. The GroEL-GroES system forms a nano-cage that allows encapsulation of the non-native substrate proteins and provides a physical environment optimized to promote and accelerate protein folding. This is Chaperonin GroEL from Pseudomonas syringae pv. tomato (strain ATCC BAA-871 / DC3000).